Consider the following 1488-residue polypeptide: Calmodulin binding protein PICBP (1488 aa).

Disordered stretches follow at residues 1-31 (MSNP…RKMW), 63-112 (TAES…SRIS), 280-329 (GPLG…GRSS), and 378-414 (HDHD…EEDG). Positions 18-31 (SSRRVHKRRERKMW) are enriched in basic residues. Positions 76–86 (DDSRTYSKSSD) are enriched in basic and acidic residues. The segment covering 98–107 (SVKRRAKSKS) has biased composition (basic residues). Acidic residues predominate over residues 297 to 312 (DNVDGDSDEEVFEEEV). 2 calmodulin-binding regions span residues 493–592 (TFHM…SLIP) and 831–938 (NSLK…DIVL). Disordered regions lie at residues 816–844 (IPDS…GETK) and 941–971 (HDTP…EGCE). Basic and acidic residues-rich tracts occupy residues 833–844 (LKEEKEHQGETK) and 954–971 (RNND…EGCE). The tract at residues 1135–1229 (EKRVKGWNNV…SLLAQAFDTI (95 aa)) is calmodulin-binding. Disordered regions lie at residues 1232-1252 (QDMG…ISRQ) and 1316-1340 (EKNQ…DTSV). Residues 1235 to 1252 (GSGSTPGSAASSRNISRQ) show a composition bias toward low complexity. Basic and acidic residues predominate over residues 1316-1328 (EKNQTLPEETRKE). Residues 1379-1483 (RQKSETLQVS…QLLVQAFESL (105 aa)) form a calmodulin-binding region.

In terms of biological role, binds calmodulin in a calcium-dependent manner in vitro. May play a role in general plant defense including R gene-mediated responses. This Arabidopsis thaliana (Mouse-ear cress) protein is Calmodulin binding protein PICBP.